The primary structure comprises 273 residues: MMTTLRRRLPDIVQYSVLSLAAFLSIFPFIWMVIGTTNTTSQIIRGKVTFGTALFDNIASFFAQVDVPLVFWNSVKIALVGTALTLLVSSLAGYGFEMFRSKLRERVYTVILLTLMVPFAALMIPLFMLMGQAGLLNTHIAIMLPMIASAFIIFYFRQASKAFPTELRDAAKVDGLKEWQIFFYIYVPVMRSTYAAAFVIVFMLNWNNYLWPLIVLQSNDTKTITLVVSSLASAYSPEYGTVMIGTILATLPTLLVFFAMQRQFVQGMLGSVK.

The next 6 membrane-spanning stretches (helical) occupy residues 15-35 (YSVL…MVIG), 77-97 (IALV…YGFE), 110-130 (VILL…FMLM), 134-154 (GLLN…FIIF), 182-204 (FFYI…VFML), and 240-260 (GTVM…FFAM). The ABC transmembrane type-1 domain maps to 71 to 260 (FWNSVKIALV…LPTLLVFFAM (190 aa)).

It belongs to the binding-protein-dependent transport system permease family. MalFG subfamily.

It is found in the cell inner membrane. Functionally, part of the binding-protein-dependent transport system for lactose. Probably responsible for the translocation of the substrate across the membrane. This Rhizobium radiobacter (Agrobacterium tumefaciens) protein is Lactose transport system permease protein LacG (lacG).